A 407-amino-acid polypeptide reads, in one-letter code: MAKEKFERSKPHVNVGTIGHVDHGKTTLTAALTRVCSEVWGGAAVAFDGIDNAPEEKERGITIATSHVEYDSPTRHYAHVDCPGHADYVKNMITGAAQMDGAILVCGATDGPMPQTREHILLSRQVGVPYIVVFLNKADLLAEDCGGVGTDEYNEMLELVEMELRELLDTYEFPGDDTPIIPGSALMALNGEDDNELGTSAVRKLVETLDEYIPEPERAIDQPFLMPIEDVFSISGRGTVVTGRVERGIVKVGEEIEIVGINATTKTTCTGVEMFRKLLDEGRAGENVGVLLRGTKRDEVERGQVLAKPGTITPHTVFQSEVYVLSKDEGGRHTPFFKGYRPQFYFRTTDVTGACELPEGVEMVMPGDNIQMTVTLIAPIAMEEGLRFAIREGGRTVGAGVVAKIIE.

Positions 10-217 (KPHVNVGTIG…TLDEYIPEPE (208 aa)) constitute a tr-type G domain. Residues 19–26 (GHVDHGKT) form a G1 region. Position 19–26 (19–26 (GHVDHGKT)) interacts with GTP. Residue Thr-26 coordinates Mg(2+). Residues 60 to 64 (GITIA) are G2. A G3 region spans residues 81–84 (DCPG). GTP-binding positions include 81–85 (DCPGH) and 136–139 (NKAD). Residues 136 to 139 (NKAD) are G4. The G5 stretch occupies residues 184 to 186 (SAL).

Belongs to the TRAFAC class translation factor GTPase superfamily. Classic translation factor GTPase family. EF-Tu/EF-1A subfamily. In terms of assembly, monomer.

The protein resides in the cytoplasm. It catalyses the reaction GTP + H2O = GDP + phosphate + H(+). GTP hydrolase that promotes the GTP-dependent binding of aminoacyl-tRNA to the A-site of ribosomes during protein biosynthesis. The polypeptide is Elongation factor Tu (Teredinibacter turnerae (strain ATCC 39867 / T7901)).